Consider the following 1377-residue polypeptide: MAQTHSFNGRKRVRKFFGKIPEVAEMPNLIEVQKASYDQFLMVEEPSGGRPDEGLQAVFKSVFPIQDFSGASMLEFVRYEFDPPKFDVDECRQRDLTYSAPLKVTLRLIVFDIDEDTGAKSIKDIKEQDVYMGDMPLMTDNGTFIVNGTERVIVSQMHRSPGVFFDHDKGKTHSSGKLLFAARVIPYRGSWLDIEFDSKDIVYARIDRRRKLPATTLLMALGMDGEEILSTFYKTVTYTRDGDNWRIPYSAERFKGMKIISDLVDADTGEAVLEAGKKLTARAAKQLAEKGLKAIKATEDDLFGSYLAEDVVNYATGEIYLEAGDEIDEKVLKTLIDTGETEINVLDIDHVNIGAYIRNTLAVDKNESRQEALFDIYRVMRPGEPPTMDSAEAMFHSLFFDSERYDLSAVGRVKMNMRLDLDAEDTVRVLRKEDILAVVKMLVELRDGRGEIDDIDNLGNRRVRSVGELMENQYRVGLLRMERAIKERMSSIEIDTVMPQDLINAKPAAAAVREFFGSSQLSQFMDQTNPLSEITHKRRLSALGPGGLTRERAGFEVRDVHPTHYGRICPIETPEGPNIGLINSLATFARVNKYGFIESPYRKVVDGKVTNDVVYLSAMEEAKHSVAQANVELDEQGGFVDEFVICRHAGEVMMAPRENVDLMDVSPKQLVSVAAALIPFLENDDANRALMGSNMQRQAVPLVRAEAPFVGTGMEPIVARDSGAAIAARRGGIVDQVDATRIVIRATEELDPSKSGVDIYRLQKFQRSNQSTCINQRPLVRVGDRIHKGDIIADGPSTDLGDLALGRNVLVAFMPWNGYNYEDSILLSEKIVSDDVFTSIHIEEFEVAARDTKLGPEEITRDIPNVSEEALKNLDEAGIVYIGAEVHPGDILVGKITPKGESPMTPEEKLLRAIFGEKASDVRDTSMRMPPGTYGTVVEVRVFNRHGVEKDERAMAIEREEIERLAKDRDDEQAILDRNVYGRLADMIDGKVAAAGPKGFKKGTTITRELMTEYPRSQWWQFAVEDEKLQGELEALRSQYDDSKKLLEARFMDKVEKVQRGDEMPPGVMKMVKVFVAVKRKIQPGDKMAGRHGNKGVVSRILPVEDMPFLEDGTHADIVLNPLGVPSRMNVGQILETHLGWACAGMGKKIGELLDVYRKTANIEPLRQTLEHIYPDNDRNEPVRSYDDDAILMLANQVKRGVSIATPVFDGAVEADINAMLTDAGLATSGQSTLYDGRTGEPFDRQVTMGYIYMLKLHHLVDDKIHARSIGPYSLVTQQPLGGKAQFGGQRFGEMEVWALEAYGAAYTLQEMLTVKSDDVAGRTKVYEAIVRGDDTFEAGIPESFNVLVKEMRSLGLNVELDDTREAEQPALPDAAE.

This sequence belongs to the RNA polymerase beta chain family. The RNAP catalytic core consists of 2 alpha, 1 beta, 1 beta' and 1 omega subunit. When a sigma factor is associated with the core the holoenzyme is formed, which can initiate transcription.

It catalyses the reaction RNA(n) + a ribonucleoside 5'-triphosphate = RNA(n+1) + diphosphate. In terms of biological role, DNA-dependent RNA polymerase catalyzes the transcription of DNA into RNA using the four ribonucleoside triphosphates as substrates. In Brucella suis biovar 1 (strain 1330), this protein is DNA-directed RNA polymerase subunit beta.